A 319-amino-acid polypeptide reads, in one-letter code: Coproporphyrin III ferrochelatase 2 (319 aa).

Fe-coproporphyrin III-binding positions include tyrosine 13, arginine 30, 46 to 47 (RY), serine 54, and tyrosine 125. Residues histidine 181 and glutamate 262 each coordinate Fe(2+).

Belongs to the ferrochelatase family.

It is found in the cytoplasm. It carries out the reaction Fe-coproporphyrin III + 2 H(+) = coproporphyrin III + Fe(2+). The protein operates within porphyrin-containing compound metabolism; protoheme biosynthesis. In terms of biological role, involved in coproporphyrin-dependent heme b biosynthesis. Catalyzes the insertion of ferrous iron into coproporphyrin III to form Fe-coproporphyrin III. The polypeptide is Coproporphyrin III ferrochelatase 2 (Bacillus cereus (strain ATCC 14579 / DSM 31 / CCUG 7414 / JCM 2152 / NBRC 15305 / NCIMB 9373 / NCTC 2599 / NRRL B-3711)).